Consider the following 145-residue polypeptide: Plastocyanin, chloroplastic (145 aa).

Residues 1 to 47 (MKATLRAPASRASAVRPVASLKAAAQRVASVAGVSVASLALTLAAHA) constitute a chloroplast transit peptide. In terms of domain architecture, Plastocyanin-like spans 48 to 145 (DATVKLGADS…AGMVGKIIVQ (98 aa)). H85, C130, H133, and M138 together coordinate Cu cation.

Belongs to the plastocyanin family. It depends on Cu(2+) as a cofactor.

The protein resides in the plastid. It is found in the chloroplast thylakoid membrane. Its function is as follows. Participates in electron transfer between P700 and the cytochrome b6-f complex in photosystem I. This chain is Plastocyanin, chloroplastic (PETE), found in Chlamydomonas reinhardtii (Chlamydomonas smithii).